Reading from the N-terminus, the 448-residue chain is Ribosomal protein uS12 methylthiotransferase RimO (448 aa).

An MTTase N-terminal domain is found at 13–128 (KSFFITTLGC…AGEILRKNFP (116 aa)). Positions 22, 58, 91, 167, 171, and 174 each coordinate [4Fe-4S] cluster. One can recognise a Radical SAM core domain in the interval 153–382 (NYSKPYSYVK…AYLGTLKTIH (230 aa)). One can recognise a TRAM domain in the interval 383–448 (QNRIGKIYPC…ELDMSGTWVD (66 aa)).

It belongs to the methylthiotransferase family. RimO subfamily. The cofactor is [4Fe-4S] cluster.

The protein resides in the cytoplasm. It catalyses the reaction L-aspartate(89)-[ribosomal protein uS12]-hydrogen + (sulfur carrier)-SH + AH2 + 2 S-adenosyl-L-methionine = 3-methylsulfanyl-L-aspartate(89)-[ribosomal protein uS12]-hydrogen + (sulfur carrier)-H + 5'-deoxyadenosine + L-methionine + A + S-adenosyl-L-homocysteine + 2 H(+). Functionally, catalyzes the methylthiolation of an aspartic acid residue of ribosomal protein uS12. This Leptospira biflexa serovar Patoc (strain Patoc 1 / Ames) protein is Ribosomal protein uS12 methylthiotransferase RimO.